Consider the following 252-residue polypeptide: Imidazole glycerol phosphate synthase subunit HisF (252 aa).

Active-site residues include D11 and D130.

It belongs to the HisA/HisF family. As to quaternary structure, heterodimer of HisH and HisF.

The protein resides in the cytoplasm. The catalysed reaction is 5-[(5-phospho-1-deoxy-D-ribulos-1-ylimino)methylamino]-1-(5-phospho-beta-D-ribosyl)imidazole-4-carboxamide + L-glutamine = D-erythro-1-(imidazol-4-yl)glycerol 3-phosphate + 5-amino-1-(5-phospho-beta-D-ribosyl)imidazole-4-carboxamide + L-glutamate + H(+). The protein operates within amino-acid biosynthesis; L-histidine biosynthesis; L-histidine from 5-phospho-alpha-D-ribose 1-diphosphate: step 5/9. In terms of biological role, IGPS catalyzes the conversion of PRFAR and glutamine to IGP, AICAR and glutamate. The HisF subunit catalyzes the cyclization activity that produces IGP and AICAR from PRFAR using the ammonia provided by the HisH subunit. The polypeptide is Imidazole glycerol phosphate synthase subunit HisF (Hydrogenobaculum sp. (strain Y04AAS1)).